Consider the following 789-residue polypeptide: E3 UFM1-protein ligase 1 (789 aa).

The interval 2 to 212 is required for E3 UFM1-protein ligase activity; that stretch reads AADWEEIRRL…VSNLITRYGF (211 aa). Disordered regions lie at residues 407–470 and 743–763; these read LENS…TGRN and SKKAEQEDDNKTEEEEGADTI. Basic residues predominate over residues 444–453; sequence KIKKTKKKGR. The segment covering 748–760 has biased composition (acidic residues); it reads QEDDNKTEEEEGA.

It belongs to the UFL1 family. As to quaternary structure, catalytic component of the UFM1 ribosome E3 ligase (UREL) complex. Interacts with E2-like enzyme UFC1.

It is found in the endoplasmic reticulum membrane. The protein resides in the cytoplasm. It localises to the cytosol. Its subcellular location is the nucleus. The protein localises to the chromosome. Its function is as follows. E3 protein ligase that mediates ufmylation, the covalent attachment of the ubiquitin-like modifier UFM1 to lysine residues on target proteins, and which plays a key role in various processes, such as ribosome recycling, response to DNA damage, interferon response or reticulophagy (also called ER-phagy). As part of the UREL complex, plays a key role in ribosome recycling by catalyzing mono-ufmylation of RPL26/uL24 subunit of the 60S ribosome. Ufmylation of RPL26/uL24 occurs on free 60S ribosomes following ribosome dissociation: it weakens the junction between post-termination 60S subunits and SEC61 translocons, promoting release and recycling of the large ribosomal subunit from the endoplasmic reticulum membrane. Ufmylation of RPL26/uL24 and subsequent 60S ribosome recycling either take place after normal termination of translation or after ribosome stalling during cotranslational translocation at the endoplasmic reticulum. Involved in reticulophagy in response to endoplasmic reticulum stress by mediating ufmylation of proteins such as CYB5R3 and RPN1, thereby promoting lysosomal degradation of ufmylated proteins. Ufmylation in response to endoplasmic reticulum stress is essential for processes such as hematopoiesis, blood vessel morphogenesis or inflammatory response. In Gallus gallus (Chicken), this protein is E3 UFM1-protein ligase 1.